Here is a 148-residue protein sequence, read N- to C-terminus: Small ribosomal subunit protein uS9 (148 aa).

Belongs to the universal ribosomal protein uS9 family.

The sequence is that of Small ribosomal subunit protein uS9 (RpS16) from Drosophila melanogaster (Fruit fly).